The primary structure comprises 583 residues: Thiol:disulfide interchange protein DsbD (583 aa).

Residues 1-20 (MLKRFIFLLVGITLTLSAHA) form the signal peptide. 2 disulfide bridges follow: cysteine 123/cysteine 128 and cysteine 200/cysteine 322. The next 8 helical transmembrane spans lie at 185-205 (IFWF…LPML), 237-257 (LTYT…QVAL), 261-281 (PVLI…FGLF), 302-322 (GGAF…ASPC), 344-364 (GLAL…ITLF), 375-395 (WLLK…VFLL), 405-425 (PLMW…VIPT), and 433-453 (VRIV…NLVW). In terms of domain architecture, Thioredoxin spans 440–583 (TFAVASYPWA…NQFLNWLNQL (144 aa)). An intrachain disulfide couples cysteine 500 to cysteine 503.

Belongs to the thioredoxin family. DsbD subfamily.

The protein localises to the cell inner membrane. The catalysed reaction is [protein]-dithiol + NAD(+) = [protein]-disulfide + NADH + H(+). The enzyme catalyses [protein]-dithiol + NADP(+) = [protein]-disulfide + NADPH + H(+). Its function is as follows. Required to facilitate the formation of correct disulfide bonds in some periplasmic proteins and for the assembly of the periplasmic c-type cytochromes. Acts by transferring electrons from cytoplasmic thioredoxin to the periplasm. This transfer involves a cascade of disulfide bond formation and reduction steps. In Actinobacillus pleuropneumoniae serotype 5b (strain L20), this protein is Thiol:disulfide interchange protein DsbD.